We begin with the raw amino-acid sequence, 196 residues long: GTP cyclohydrolase 1 (196 aa).

3 residues coordinate Zn(2+): cysteine 86, histidine 89, and cysteine 158.

Belongs to the GTP cyclohydrolase I family. As to quaternary structure, toroid-shaped homodecamer, composed of two pentamers of five dimers.

It catalyses the reaction GTP + H2O = 7,8-dihydroneopterin 3'-triphosphate + formate + H(+). It participates in cofactor biosynthesis; 7,8-dihydroneopterin triphosphate biosynthesis; 7,8-dihydroneopterin triphosphate from GTP: step 1/1. This is GTP cyclohydrolase 1 from Clostridium botulinum (strain ATCC 19397 / Type A).